A 121-amino-acid polypeptide reads, in one-letter code: Small ribosomal subunit protein uS13 (121 aa).

Positions 94–121 are disordered; it reads GLPVRGQRTRTNARTRKGKRKTVAGKKK.

It belongs to the universal ribosomal protein uS13 family. Part of the 30S ribosomal subunit. Forms a loose heterodimer with protein S19. Forms two bridges to the 50S subunit in the 70S ribosome.

Located at the top of the head of the 30S subunit, it contacts several helices of the 16S rRNA. In the 70S ribosome it contacts the 23S rRNA (bridge B1a) and protein L5 of the 50S subunit (bridge B1b), connecting the 2 subunits; these bridges are implicated in subunit movement. Contacts the tRNAs in the A and P-sites. The sequence is that of Small ribosomal subunit protein uS13 from Treponema pallidum (strain Nichols).